The primary structure comprises 177 residues: Cytidylate kinase (177 aa).

Residue 7 to 15 (GSPGSGTTT) coordinates ATP.

The protein belongs to the cytidylate kinase family. Type 2 subfamily.

It localises to the cytoplasm. It carries out the reaction CMP + ATP = CDP + ADP. The enzyme catalyses dCMP + ATP = dCDP + ADP. The protein is Cytidylate kinase of Methanocorpusculum labreanum (strain ATCC 43576 / DSM 4855 / Z).